The chain runs to 259 residues: HTH-type quorum sensing-dependent transcriptional regulator VjbR (259 aa).

The interval 76-179 is C12-HSL binding; sequence KNYFAIDPVF…AGIIHGTVCG (104 aa). One can recognise an HTH luxR-type domain in the interval 183 to 248; sequence ANSVASLLTP…SAVATALSLG (66 aa). The H-T-H motif DNA-binding region spans 207–226; that stretch reads DGEIAEILSIARWTVVTYLQ.

Its function is as follows. Transcriptional regulator involved in the global control of Brucella gene expression. Mediates the effects of the quorum sensing autoinducer C12-HSL (N-dodecanoyl-homoserine lactone) on a large and diverse number of genes. This Brucella suis biovar 1 (strain 1330) protein is HTH-type quorum sensing-dependent transcriptional regulator VjbR (vjbR).